Reading from the N-terminus, the 244-residue chain is uncharacterized protein (244 aa).

Positions 1–127 (MSGPQGSDPR…YPGQYGPYGQ (127 aa)) are disordered. Over residues 34–43 (WQQQPTQEAT) the composition is skewed to polar residues. Composition is skewed to low complexity over residues 45–75 (QAPAYTPQYQQPADPAYPQQYPQPTPGYAQP) and 88–127 (PGQYGQYQQPGQYGQPGQYGQPGQYAPPGQYPGQYGPYGQ). Residues 136–156 (VAVIGGVIAVMAVLFIGAVLI) form a helical membrane-spanning segment.

The protein resides in the membrane. This is an uncharacterized protein from Mycobacterium tuberculosis (strain CDC 1551 / Oshkosh).